We begin with the raw amino-acid sequence, 100 residues long: Large ribosomal subunit protein bL28 (100 aa).

Belongs to the bacterial ribosomal protein bL28 family.

In Ehrlichia ruminantium (strain Welgevonden), this protein is Large ribosomal subunit protein bL28.